We begin with the raw amino-acid sequence, 151 residues long: Ribosome maturation factor RimP (151 aa).

This sequence belongs to the RimP family.

The protein localises to the cytoplasm. Functionally, required for maturation of 30S ribosomal subunits. In Aliivibrio fischeri (strain ATCC 700601 / ES114) (Vibrio fischeri), this protein is Ribosome maturation factor RimP.